The primary structure comprises 459 residues: XK-related protein 3 (459 aa).

A run of 10 helical transmembrane segments spans residues 35–55, 68–88, 97–117, 169–189, 199–219, 238–258, 264–284, 300–320, 345–365, and 377–397; these read FSII…LYMF, SFTI…LMFF, AALL…LHTI, IQAF…SLTI, LMTF…ILAI, VVMW…FFIA, SLPV…LEFW, MVGT…INFS, ILHY…FRFF, and LIAV…LLFY.

The protein belongs to the XK family. As to expression, expressed predominantly, if not exclusively, in testis.

The protein localises to the cell membrane. In Homo sapiens (Human), this protein is XK-related protein 3 (XKR3).